The following is a 414-amino-acid chain: MTYLAVVLNGPKAKNGRKVFDSFLEQNRQMFWNRELTSACESITYMGFMRPGTLFVSGPASQLTVLKDAWARRILKPAMGYTITSLGDLGAIQQVEQMHFVPLGDVICDAVAQLNRQGLAATEQAIRQYVARHCPHVAPPGIEMVRQTITSLLSTGFVYKMADHYFVSVPTNSPMRPPAKAATKTTKTTVECQTGASMMCPQQTSTSSDEHVIEPAKKDHKKCQNSNRRSIFARLFSRGMKPQTIMPSASPIHVGGPPTPPPAAMLPTKNKYPTYHHDLNEECQRKARRRNHPRRGETQKLLSSSSECLKYYPVDMPETRPTRRRARMASPLRSSTPNNSDSAYSISPPHTDSNEEAGSISDSEINHTYININKFRRQNFDSTQFEDLTGATATTSEEPEILGRHIRGVLISNL.

An essential for association with cell cortex region spans residues Met1–Phe31. The region spanning Gln93–Pro170 is the Winged helix Storkhead-box1 domain. The interval Glu282–Asp362 is disordered. Positions Arg285–Arg295 are bi-partite nuclear localization signal. Residues Pro321–Arg327 form a nuclear localization signal region. A compositionally biased stretch (polar residues) spans Leu332–Thr351.

Its subcellular location is the cytoplasm. The protein resides in the cell cortex. It is found in the nucleus. Probable transcription factor. Required for asymmetric cell division in neuroblasts, perhaps acting by regulating spindle positioning and myosin polarization, and thus the position of the cleavage plane. Required to produce daughter cell size asymmetry in neuroblasts undergoing asymmetric cell division, usually giving rise to one precursor cell and one apoptotic cell. Positively modulates expression of the serine/threonine kinase pig-1/MELK during asymmetric division of the Q.a neuroblast. Plays a role in neural fate specification in several dopaminergic lineages, including the hermaphrodite-specific neuron (HSN)/phasmid neuron (PHB), acting in concert with the kinase, ham-1, and the T-box protein tbx-2 and the homeobox protein egl-5. The protein is Stork-head box protein ham-1 of Caenorhabditis elegans.